A 566-amino-acid chain; its full sequence is Chaperone Ric-8 (566 aa).

This sequence belongs to the synembryn family. In terms of assembly, interacts with GDP-bound G(i)-alpha protein. Does not interact with G-alpha proteins when they are in complex with subunits beta and gamma. Interacts with Frq2 in a Ca(2+)-independent manner but does not interact with Frq1.

It localises to the cytoplasm. Its subcellular location is the cell cortex. The protein localises to the presynapse. Functionally, chaperone that specifically binds and folds some, but not all, nascent G alpha proteins prior to G protein heterotrimer formation, promoting their stability and activity. Also acts as a guanine nucleotide exchange factor (GEF) for G alpha proteins by stimulating exchange of bound GDP for free GTP. Plays a key role in asymmetric spindle positioning, a step for asymmetric cell division that generates cell diversity during development by activating G(i) alpha protein independently of G-protein coupled receptors. Required during gastrulation and sensory organ precursor (SOP) formation. Plays a role in positively regulating synapse number and neurotransmitter release. This is Chaperone Ric-8 (ric8a) from Drosophila pseudoobscura pseudoobscura (Fruit fly).